An 814-amino-acid polypeptide reads, in one-letter code: Phenylalanine--tRNA ligase beta subunit (814 aa).

The tRNA-binding domain occupies 39–153 (SARAKGVVVG…ELPALGAPVA (115 aa)). The B5 domain maps to 414–498 (ADASSVLLRR…RLVGFDRFGA (85 aa)). Asp476, Asp482, Glu485, and Glu486 together coordinate Mg(2+). An FDX-ACB domain is found at 720 to 813 (PTVPASERDL…LVKQHGAELR (94 aa)).

The protein belongs to the phenylalanyl-tRNA synthetase beta subunit family. Type 1 subfamily. Tetramer of two alpha and two beta subunits. Mg(2+) is required as a cofactor.

Its subcellular location is the cytoplasm. The catalysed reaction is tRNA(Phe) + L-phenylalanine + ATP = L-phenylalanyl-tRNA(Phe) + AMP + diphosphate + H(+). The polypeptide is Phenylalanine--tRNA ligase beta subunit (Parasynechococcus marenigrum (strain WH8102)).